Reading from the N-terminus, the 217-residue chain is Ribose-5-phosphate isomerase A (217 aa).

Substrate is bound by residues 28-31 (TGST), 81-84 (DGAD), and 94-97 (KGGG). Residue Glu103 is the Proton acceptor of the active site. Lys121 lines the substrate pocket.

The protein belongs to the ribose 5-phosphate isomerase family. In terms of assembly, homodimer.

The catalysed reaction is aldehydo-D-ribose 5-phosphate = D-ribulose 5-phosphate. Its pathway is carbohydrate degradation; pentose phosphate pathway; D-ribose 5-phosphate from D-ribulose 5-phosphate (non-oxidative stage): step 1/1. In terms of biological role, catalyzes the reversible conversion of ribose-5-phosphate to ribulose 5-phosphate. In Aeromonas hydrophila subsp. hydrophila (strain ATCC 7966 / DSM 30187 / BCRC 13018 / CCUG 14551 / JCM 1027 / KCTC 2358 / NCIMB 9240 / NCTC 8049), this protein is Ribose-5-phosphate isomerase A.